The primary structure comprises 913 residues: Ubiquitin carboxyl-terminal hydrolase 26 (913 aa).

The 592-residue stretch at His-295–Asn-886 folds into the USP domain. The active-site Nucleophile is the Cys-304. Residues His-601 to Lys-612 are compositionally biased toward basic and acidic residues. Disordered stretches follow at residues His-601–Asn-636 and Gln-753–Leu-772. The Proton acceptor role is filled by His-841.

Belongs to the peptidase C19 family. As to quaternary structure, interacts with RING1. Expressed in testis.

The protein resides in the nucleus. Its subcellular location is the cytoplasm. It is found in the cytoskeleton. It localises to the flagellum axoneme. The enzyme catalyses Thiol-dependent hydrolysis of ester, thioester, amide, peptide and isopeptide bonds formed by the C-terminal Gly of ubiquitin (a 76-residue protein attached to proteins as an intracellular targeting signal).. Its function is as follows. Deubiquitinase regulating several biological processes through the deubiquitination of components of these processes. Involved in somatic cell reprogramming through the 'Lys-48'-linked deubiquitination and stabilization of CBX4 and CBX6, two components of the polycomb-repressive complex 1 (PRC1). Also deubiquitinates and probably stabilizes the androgen receptor (AR), regulating the androgen receptor signaling pathway. May play a role in spermatogenesis. This Homo sapiens (Human) protein is Ubiquitin carboxyl-terminal hydrolase 26.